The chain runs to 238 residues: Sugar fermentation stimulation protein homolog (238 aa).

This sequence belongs to the SfsA family.

The sequence is that of Sugar fermentation stimulation protein homolog from Haemophilus influenzae (strain PittGG).